Reading from the N-terminus, the 316-residue chain is MINMDISVTPNYSYIFDFENDFIHQRTRKWMLENWTWVFYYCGIYMLVIFGGQHFMQNRPRFQLRGPLIIWNTLLAMFSIMGAARTAPELIHVLRHYGLFHSVCVPSYIEQDRVCGFWTWLFVLSKLPELGDTIFIVLRKQPLIFLHWYHHITVLIYSWFSYTEYTSSARWFIVMNYCVHSVMYSYYALKAARFNPPRFISMIITSLQLAQMIIGCAINVWANGFLKTHGTSSCHISQRNINLSIAMYSSYFVLFARFFYKAYLAPGGHKSRRMAASLAAQNVVKQSSSPQQASESSKFIGAGEDQAAYLRKAKAQ.

Asparagine 11 is a glycosylation site (N-linked (GlcNAc...) asparagine). 6 helical membrane passes run 30–50 (WMLENWTWVFYYCGIYMLVIF), 64–84 (LRGPLIIWNTLLAMFSIMGAA), 117–137 (FWTWLFVLSKLPELGDTIFIV), 142–162 (PLIFLHWYHHITVLIYSWFSY), 167–189 (SSARWFIVMNYCVHSVMYSYYAL), and 202–222 (MIITSLQLAQMIIGCAINVWA). Asparagine 242 carries N-linked (GlcNAc...) asparagine glycosylation. A helical transmembrane segment spans residues 245–265 (IAMYSSYFVLFARFFYKAYLA).

It belongs to the ELO family. ELOVL6 subfamily. In terms of tissue distribution, detected in the CNS (central nervous system) of third larval instar (at protein level). Expressed in cyst progenitor cells (at protein level). In the adult fly, expressed in several tissues including, sperm, follicular epithelium, nurse cells and cyst cells.

The protein localises to the mitochondrion outer membrane. Its subcellular location is the endoplasmic reticulum membrane. It carries out the reaction a very-long-chain acyl-CoA + malonyl-CoA + H(+) = a very-long-chain 3-oxoacyl-CoA + CO2 + CoA. The catalysed reaction is hexadecanoyl-CoA + malonyl-CoA + H(+) = 3-oxooctadecanoyl-CoA + CO2 + CoA. The protein operates within lipid metabolism; fatty acid biosynthesis. Functionally, catalyzes the first and rate-limiting reaction of the four reactions that constitute the long-chain fatty acids elongation cycle. This process allows the addition of 2 carbons to the chain of long- and very long-chain fatty acids (VLCFAs) per cycle. Condensing enzyme that elongates fatty acids with 12, 14 and 16 carbons with higher activity toward C16:0 acyl-CoAs. Catalyzes the synthesis of unsaturated C16 long chain fatty acids and, to a lesser extent, C18:0 and those with low desaturation degree. May participate in the production of saturated and monounsaturated VLCFAs of different chain lengths that are involved in multiple biological processes as precursors of membrane lipids and lipid mediators. The sequence is that of Very long chain fatty acid elongase 6 from Drosophila melanogaster (Fruit fly).